A 208-amino-acid polypeptide reads, in one-letter code: N-(5'-phosphoribosyl)anthranilate isomerase (208 aa).

Belongs to the TrpF family.

It carries out the reaction N-(5-phospho-beta-D-ribosyl)anthranilate = 1-(2-carboxyphenylamino)-1-deoxy-D-ribulose 5-phosphate. It participates in amino-acid biosynthesis; L-tryptophan biosynthesis; L-tryptophan from chorismate: step 3/5. This chain is N-(5'-phosphoribosyl)anthranilate isomerase, found in Pyrococcus furiosus (strain ATCC 43587 / DSM 3638 / JCM 8422 / Vc1).